The primary structure comprises 255 residues: Vitamin B12 import ATP-binding protein BtuD (255 aa).

The 239-residue stretch at 2-240 (MRVKHIAVGS…AGLAEVFKTQ (239 aa)) folds into the ABC transporter domain. 30–37 (GPNGSGKS) lines the ATP pocket.

This sequence belongs to the ABC transporter superfamily. Vitamin B12 importer (TC 3.A.1.13.1) family. In terms of assembly, the complex is composed of two ATP-binding proteins (BtuD), two transmembrane proteins (BtuC) and a solute-binding protein (BtuF).

The protein localises to the cell inner membrane. The enzyme catalyses an R-cob(III)alamin(out) + ATP + H2O = an R-cob(III)alamin(in) + ADP + phosphate + H(+). Part of the ABC transporter complex BtuCDF involved in vitamin B12 import. Responsible for energy coupling to the transport system. In Vibrio parahaemolyticus serotype O3:K6 (strain RIMD 2210633), this protein is Vitamin B12 import ATP-binding protein BtuD.